The following is a 1040-amino-acid chain: MQVLPPGSTGGPSRLFILRPVATTLLMAAILLAGIIGYRFLPVAALPEVDYPTIQVVTLYPGASPDVMTSAVTAPLERQFGQMSGLKQMSSQSSGGASVVTLQFQLTLPLDVAEQEVQAAINAATNLLPSDLPNPPIYSKVNPADPPIMTLAVTSNAMPMTQVEDMVETRVAQKISQVSGVGLVTLAGGQRPAVRVKLNAQAIAALGLTSETVRTAITGANVNSAKGSLDGPERAVTLSANDQMQSADEYRKLIIAYQNGAPVRLGDVATVEQGAENSWLGAWANQAPAIVMNVQRQPGANIIATADSIRQMLPQLTESLPKSVKVTVLSDRTTNIRASVRDTQFELMLAIALVVMIIYLFLRNIPATIIPGVAVPLSLIGTFAVMVFLDFSINNLTLMALTIATGFVVDDAIVVIENISRYIEKGEKPLAAALKGAGEIGFTIISLTFSLIAVLIPLLFMGDIVGRLFREFAVTLAVAILISAVVSLTLTPMMCARMLSQQSLRKQNRFSRACERMFDRVIASYGRGLAKVLNHPWLTLSVAFATLLLSVMLWIVIPKGFFPVQDNGIIQGTLQAPQSSSYASMAQRQRQVAERILQDPAVQSLTTFVGVDGANPTLNSARLQINLKPLDARDDRVQQVISRLQTAVATIPGVALYLQPTQDLTIDTQVSRTQYQFTLQATTLDALSHWVPKLQNALQSLPQLSEVSSDWQDRGLAAWVNVDRDSASRLGISMADVDNALYNAFGQRLISTIYTQANQYRVVLEHNTASTPGLAALETIRLTSRDGGTVPLSAIARIEQRFAPLSINHLDQFPVTTFSFNVPEGYSLGDAVQAILDTEKTLALPADITTQFQGSTLAFQAALGSTVWLIVAAVVAMYIVLGVLYESFIHPITILSTLPTAGVGALLALIIAGSELDIIAIIGIILLIGIVKKNAIMMIDFALAAEREQGMSPRDAIFQACLLRFRPILMTTLAALLGALPLMLSTGVGAELRRPLGIAMVGGLLVSQVLTLFTTPVIYLLFDRLSLYVKSRFPRHKEEA.

12 helical membrane passes run 25 to 45, 347 to 367, 369 to 389, 396 to 416, 440 to 460, 472 to 492, 537 to 557, 863 to 883, 888 to 908, 910 to 930, 968 to 988, and 998 to 1018; these read LLMA…PVAA, LMLA…NIPA, IIPG…MVFL, LTLM…IVVI, IGFT…PLLF, FAVT…TLTP, WLTL…WIVI, LGST…VLGV, FIHP…ALLA, IIAG…LIGI, ILMT…STGV, and IAMV…TPVI.

The protein belongs to the resistance-nodulation-cell division (RND) (TC 2.A.6) family. MdtB subfamily. As to quaternary structure, part of a tripartite efflux system composed of MdtA, MdtB and MdtC. MdtB forms a heteromultimer with MdtC.

Its subcellular location is the cell inner membrane. This chain is Multidrug resistance protein MdtB, found in Salmonella dublin (strain CT_02021853).